A 51-amino-acid chain; its full sequence is uncharacterized protein (51 aa).

This is an uncharacterized protein from Bacillus subtilis (strain 168).